The sequence spans 200 residues: NADH-quinone oxidoreductase subunit C (200 aa).

It belongs to the complex I 30 kDa subunit family. In terms of assembly, NDH-1 is composed of 14 different subunits. Subunits NuoB, C, D, E, F, and G constitute the peripheral sector of the complex.

It is found in the cell inner membrane. The enzyme catalyses a quinone + NADH + 5 H(+)(in) = a quinol + NAD(+) + 4 H(+)(out). In terms of biological role, NDH-1 shuttles electrons from NADH, via FMN and iron-sulfur (Fe-S) centers, to quinones in the respiratory chain. The immediate electron acceptor for the enzyme in this species is believed to be ubiquinone. Couples the redox reaction to proton translocation (for every two electrons transferred, four hydrogen ions are translocated across the cytoplasmic membrane), and thus conserves the redox energy in a proton gradient. The polypeptide is NADH-quinone oxidoreductase subunit C (Agrobacterium fabrum (strain C58 / ATCC 33970) (Agrobacterium tumefaciens (strain C58))).